A 536-amino-acid chain; its full sequence is Bifunctional purine biosynthesis protein PurH (536 aa).

The 151-residue stretch at 8-158 (IPAPDEVRIQ…KNHAYVTIVT (151 aa)) folds into the MGS-like domain.

This sequence belongs to the PurH family.

It carries out the reaction (6R)-10-formyltetrahydrofolate + 5-amino-1-(5-phospho-beta-D-ribosyl)imidazole-4-carboxamide = 5-formamido-1-(5-phospho-D-ribosyl)imidazole-4-carboxamide + (6S)-5,6,7,8-tetrahydrofolate. The catalysed reaction is IMP + H2O = 5-formamido-1-(5-phospho-D-ribosyl)imidazole-4-carboxamide. It functions in the pathway purine metabolism; IMP biosynthesis via de novo pathway; 5-formamido-1-(5-phospho-D-ribosyl)imidazole-4-carboxamide from 5-amino-1-(5-phospho-D-ribosyl)imidazole-4-carboxamide (10-formyl THF route): step 1/1. The protein operates within purine metabolism; IMP biosynthesis via de novo pathway; IMP from 5-formamido-1-(5-phospho-D-ribosyl)imidazole-4-carboxamide: step 1/1. The polypeptide is Bifunctional purine biosynthesis protein PurH (Sinorhizobium fredii (strain NBRC 101917 / NGR234)).